The primary structure comprises 511 residues: Probable endopeptidase p60 (511 aa).

The N-terminal stretch at 1-27 (MNMKKATIVSAAGIAVTAFAAPSVVSA) is a signal peptide. A LysM 1 domain is found at 28 to 71 (NTVVVASGDTLWGIASKTGTTVDQLKQLNKLDSDRIVPGQKLTI). The region spanning 78 to 142 (KVEKSVSATW…VNGKYLSDAK (65 aa)) is the SH3b domain. The LysM 2 domain maps to 175–218 (STYKVKSGDTIWALSVKYGVPVQKLIEWNNLSSSSIYVGQTIAV). Composition is skewed to low complexity over residues 229–257 (TVKQAAPAKVAPKQEVKQTAPAKQEQAKP) and 264–282 (KPAVSKPKAATPAPTAKPA). The tract at residues 229–291 (TVKQAAPAKV…AVEQKASTPA (63 aa)) is disordered. One can recognise a LysM 3 domain in the interval 297–341 (ATYKVQNGDSLGKIASLFKVSVADLTNWNNLNATITIYAGQELSV). Low complexity-rich tracts occupy residues 347–362 (KPKPAAPAKPAVSKPA) and 372–390 (TNTTNNSTPTTNVNNNTSQ). Positions 347-390 (KPKPAAPAKPAVSKPATSTPAKVTPTNTTNNSTPTTNVNNNTSQ) are disordered. Residues 393-511 (SASFSALYAE…GQYLVGFGRV (119 aa)) form the NlpC/P60 domain. Residue Cys423 is the Nucleophile of the active site. The Proton acceptor role is filled by His473. Asp485 is a catalytic residue.

It belongs to the peptidase C40 family.

Functionally, this major extracellular protein may be involved in the invasion of non-professional phagocytic cells by Listeria. This Listeria grayi (Listeria murrayi) protein is Probable endopeptidase p60 (iap).